The following is a 104-amino-acid chain: SOSS complex subunit C (104 aa).

An N-acetylalanine modification is found at Ala-2. Ser-50 carries the phosphoserine modification.

This sequence belongs to the SOSS-C family. Component of the SOSS complex, composed of SOSS-B (SOSS-B1/NABP2 or SOSS-B2/NABP1), SOSS-A/INTS3 and SOSS-C/INIP. SOSS complexes containing SOSS-B1/NABP2 are more abundant than complexes containing SOSS-B2/NABP1. Interacts with INTS3; the interaction is direct.

The protein localises to the nucleus. Its function is as follows. Component of the SOSS complex, a multiprotein complex that functions downstream of the MRN complex to promote DNA repair and G2/M checkpoint. The SOSS complex associates with single-stranded DNA at DNA lesions and influences diverse endpoints in the cellular DNA damage response including cell-cycle checkpoint activation, recombinational repair and maintenance of genomic stability. Required for efficient homologous recombination-dependent repair of double-strand breaks (DSBs) and ATM-dependent signaling pathways. The polypeptide is SOSS complex subunit C (Inip) (Mus musculus (Mouse)).